A 402-amino-acid chain; its full sequence is Alkaline proteinase (402 aa).

The signal sequence occupies residues 1–20 (MVTLRRLAVLLGAIPAALAA). Positions 21-120 (PTTQKREVVP…EQDEGEFSTA (100 aa)) are excised as a propeptide. An Inhibitor I9 domain is found at 32–108 (KYIVTLKEGA…EVEEDQIWHL (77 aa)). A Peptidase S8 domain is found at 128 to 402 (AWGLGTISHR…NRILYNGNGA (275 aa)). Residues D160, H191, and S347 each act as charge relay system in the active site. The span at 382–392 (GRVSNPGSGSP) shows a compositional bias: polar residues. The disordered stretch occupies residues 382-402 (GRVSNPGSGSPNRILYNGNGA).

Belongs to the peptidase S8 family.

In Hapsidospora chrysogena (Acremonium chrysogenum), this protein is Alkaline proteinase (ALP).